Here is a 348-residue protein sequence, read N- to C-terminus: Putative [LysW]-L-2-aminoadipate/[LysW]-L-glutamate phosphate reductase (348 aa).

9–12 is a binding site for NADP(+); it reads SGYV. Residue Cys149 is part of the active site. Asn315 contacts NADP(+).

Belongs to the NAGSA dehydrogenase family. Type 1 subfamily. LysY sub-subfamily.

The protein localises to the cytoplasm. It carries out the reaction [amino-group carrier protein]-C-terminal-N-(1-carboxy-5-oxopentan-1-yl)-L-glutamine + phosphate + NADP(+) = [amino-group carrier protein]-C-terminal-N-(1-carboxy-5-phosphooxy-5-oxopentan-1-yl)-L-glutamine + NADPH + H(+). The enzyme catalyses [amino-group carrier protein]-C-terminal-gamma-(L-glutamyl-5-semialdehyde)-L-glutamate + phosphate + NADP(+) = [amino-group carrier protein]-C-terminal-gamma-(5-phospho-L-glutamyl)-L-glutamate + NADPH + H(+). It participates in amino-acid biosynthesis; L-lysine biosynthesis via AAA pathway; L-lysine from L-alpha-aminoadipate (Thermus route): step 3/5. The protein operates within amino-acid biosynthesis; L-arginine biosynthesis. Functionally, involved in both the arginine and lysine biosynthetic pathways. The protein is Putative [LysW]-L-2-aminoadipate/[LysW]-L-glutamate phosphate reductase of Cenarchaeum symbiosum (strain A).